The primary structure comprises 207 residues: Ribosomal RNA small subunit methyltransferase G (207 aa).

S-adenosyl-L-methionine is bound by residues Gly-74, Leu-79, 125–126 (VE), and Arg-140.

The protein belongs to the methyltransferase superfamily. RNA methyltransferase RsmG family.

It localises to the cytoplasm. The catalysed reaction is guanosine(527) in 16S rRNA + S-adenosyl-L-methionine = N(7)-methylguanosine(527) in 16S rRNA + S-adenosyl-L-homocysteine. In terms of biological role, specifically methylates the N7 position of guanine in position 527 of 16S rRNA. This Shewanella loihica (strain ATCC BAA-1088 / PV-4) protein is Ribosomal RNA small subunit methyltransferase G.